We begin with the raw amino-acid sequence, 348 residues long: N-acetyl-gamma-glutamyl-phosphate reductase (348 aa).

Residue C151 is part of the active site.

The protein belongs to the NAGSA dehydrogenase family. Type 1 subfamily.

It is found in the cytoplasm. The enzyme catalyses N-acetyl-L-glutamate 5-semialdehyde + phosphate + NADP(+) = N-acetyl-L-glutamyl 5-phosphate + NADPH + H(+). The protein operates within amino-acid biosynthesis; L-arginine biosynthesis; N(2)-acetyl-L-ornithine from L-glutamate: step 3/4. In terms of biological role, catalyzes the NADPH-dependent reduction of N-acetyl-5-glutamyl phosphate to yield N-acetyl-L-glutamate 5-semialdehyde. This chain is N-acetyl-gamma-glutamyl-phosphate reductase, found in Lachnospira eligens (strain ATCC 27750 / DSM 3376 / VPI C15-48 / C15-B4) (Eubacterium eligens).